A 192-amino-acid chain; its full sequence is Ion-translocating oxidoreductase complex subunit A (192 aa).

The next 6 helical transmembrane spans lie at 5–25 (LLLLIGTVLVNNFVLVKFLGL), 39–59 (IGMSMATTFVLTLASVLSFLV), 72–92 (LRTMSFILVIAVVVQFTEMLV), 102–122 (ALGIYLPLITTNCAVLGVALL), 134–154 (AIYGFGAAVGFSLVLILFSAM), and 171–191 (AIAMITAGLMSLAFMGFTGLV).

This sequence belongs to the NqrDE/RnfAE family. In terms of assembly, the complex is composed of six subunits: RnfA, RnfB, RnfC, RnfD, RnfE and RnfG.

Its subcellular location is the cell inner membrane. In terms of biological role, part of a membrane-bound complex that couples electron transfer with translocation of ions across the membrane. The protein is Ion-translocating oxidoreductase complex subunit A of Shewanella amazonensis (strain ATCC BAA-1098 / SB2B).